The chain runs to 55 residues: Metallothionein-1 (55 aa).

The protein belongs to the metallothionein superfamily. Type 11 family.

The polypeptide is Metallothionein-1 (MTP1) (Yarrowia lipolytica (strain CLIB 122 / E 150) (Yeast)).